The chain runs to 324 residues: Beta-ketoacyl-[acyl-carrier-protein] synthase III (324 aa).

Residues C114 and H251 contribute to the active site. Positions 252–256 are ACP-binding; sequence QANRR. Residue N281 is part of the active site.

The protein belongs to the thiolase-like superfamily. FabH family. In terms of assembly, homodimer.

It localises to the cytoplasm. The enzyme catalyses malonyl-[ACP] + acetyl-CoA + H(+) = 3-oxobutanoyl-[ACP] + CO2 + CoA. The protein operates within lipid metabolism; fatty acid biosynthesis. Functionally, catalyzes the condensation reaction of fatty acid synthesis by the addition to an acyl acceptor of two carbons from malonyl-ACP. Catalyzes the first condensation reaction which initiates fatty acid synthesis and may therefore play a role in governing the total rate of fatty acid production. Possesses both acetoacetyl-ACP synthase and acetyl transacylase activities. Its substrate specificity determines the biosynthesis of branched-chain and/or straight-chain of fatty acids. The polypeptide is Beta-ketoacyl-[acyl-carrier-protein] synthase III (Paramagnetospirillum magneticum (strain ATCC 700264 / AMB-1) (Magnetospirillum magneticum)).